The sequence spans 94 residues: Large ribosomal subunit protein uL23 (94 aa).

The protein belongs to the universal ribosomal protein uL23 family. Part of the 50S ribosomal subunit. Contacts protein L29, and trigger factor when it is bound to the ribosome.

Functionally, one of the early assembly proteins it binds 23S rRNA. One of the proteins that surrounds the polypeptide exit tunnel on the outside of the ribosome. Forms the main docking site for trigger factor binding to the ribosome. The chain is Large ribosomal subunit protein uL23 from Lysinibacillus sphaericus (strain C3-41).